Reading from the N-terminus, the 293-residue chain is RNA pseudouridylate synthase domain-containing protein 1 (293 aa).

The active site involves Asp-67.

It belongs to the pseudouridine synthase RluA family.

This chain is RNA pseudouridylate synthase domain-containing protein 1 (rpusd1), found in Danio rerio (Zebrafish).